Reading from the N-terminus, the 343-residue chain is Phosphoribosylformylglycinamidine cyclo-ligase (343 aa).

Belongs to the AIR synthase family.

Its subcellular location is the cytoplasm. The catalysed reaction is 2-formamido-N(1)-(5-O-phospho-beta-D-ribosyl)acetamidine + ATP = 5-amino-1-(5-phospho-beta-D-ribosyl)imidazole + ADP + phosphate + H(+). It functions in the pathway purine metabolism; IMP biosynthesis via de novo pathway; 5-amino-1-(5-phospho-D-ribosyl)imidazole from N(2)-formyl-N(1)-(5-phospho-D-ribosyl)glycinamide: step 2/2. This is Phosphoribosylformylglycinamidine cyclo-ligase from Carboxydothermus hydrogenoformans (strain ATCC BAA-161 / DSM 6008 / Z-2901).